The sequence spans 246 residues: 1-(5-phosphoribosyl)-5-[(5-phosphoribosylamino)methylideneamino] imidazole-4-carboxamide isomerase (246 aa).

Asp-12 (proton acceptor) is an active-site residue. The active-site Proton donor is the Asp-134.

The protein belongs to the HisA/HisF family.

Its subcellular location is the cytoplasm. It catalyses the reaction 1-(5-phospho-beta-D-ribosyl)-5-[(5-phospho-beta-D-ribosylamino)methylideneamino]imidazole-4-carboxamide = 5-[(5-phospho-1-deoxy-D-ribulos-1-ylimino)methylamino]-1-(5-phospho-beta-D-ribosyl)imidazole-4-carboxamide. It participates in amino-acid biosynthesis; L-histidine biosynthesis; L-histidine from 5-phospho-alpha-D-ribose 1-diphosphate: step 4/9. In Haloarcula marismortui (strain ATCC 43049 / DSM 3752 / JCM 8966 / VKM B-1809) (Halobacterium marismortui), this protein is 1-(5-phosphoribosyl)-5-[(5-phosphoribosylamino)methylideneamino] imidazole-4-carboxamide isomerase.